Reading from the N-terminus, the 264-residue chain is Protein Saci_1508 (264 aa).

This sequence belongs to the CinA family.

In Sulfolobus acidocaldarius (strain ATCC 33909 / DSM 639 / JCM 8929 / NBRC 15157 / NCIMB 11770), this protein is Protein Saci_1508.